The chain runs to 391 residues: Ribosomal RNA small subunit methyltransferase H (391 aa).

Positions 1–23 (MDVDVQDDVQGRAGEGAEERAHD) are disordered. S-adenosyl-L-methionine-binding positions include 59-61 (GGH), Asp78, Leu112, Asp126, and Gln133. The interval 284 to 391 (SSSSAPPDLP…EPGATVERTP (108 aa)) is disordered. Residues 368–380 (RTQEFETHPHLEP) are compositionally biased toward basic and acidic residues.

The protein belongs to the methyltransferase superfamily. RsmH family.

The protein localises to the cytoplasm. It carries out the reaction cytidine(1402) in 16S rRNA + S-adenosyl-L-methionine = N(4)-methylcytidine(1402) in 16S rRNA + S-adenosyl-L-homocysteine + H(+). Its function is as follows. Specifically methylates the N4 position of cytidine in position 1402 (C1402) of 16S rRNA. This is Ribosomal RNA small subunit methyltransferase H from Kineococcus radiotolerans (strain ATCC BAA-149 / DSM 14245 / SRS30216).